The following is a 136-amino-acid chain: Probable S-adenosyl-L-methionine-binding protein PH1056 (136 aa).

The TsaA-like domain occupies isoleucine 8 to glutamate 126. S-adenosyl-L-methionine contacts are provided by residues histidine 48–lysine 49, arginine 78, and glutamate 106–threonine 109.

It belongs to the tRNA methyltransferase O family.

The protein is Probable S-adenosyl-L-methionine-binding protein PH1056 of Pyrococcus horikoshii (strain ATCC 700860 / DSM 12428 / JCM 9974 / NBRC 100139 / OT-3).